Here is a 342-residue protein sequence, read N- to C-terminus: MRIEALNTAPDATEVRFEEQIRPQSMSDFAGQKKLTDNLKVFITAARKRGDALDHVLLSGPPGLGKTTLAHIIAAEMGGGIKITSGPLIDKAGNLAGLLTSLKKGDILFIDEIHRLAPAVEEYLYSAMEDYRIDILLDSGPASRAVQLKLEPFTLVGATTRSGLLTSPLRARFGINSRLDYYSPELLQSIIVRAAGILNIGVDEDAAMEIARRSRGTPRIANRLLRRARDFAQVANEASISLAVARRTLESLEIDEGGLDDMDKKILEAIVRKFNGGPVGVASLAVSVGEEQDTIEEVYEPYLIQVGYLARTPRGRVATRLAMQRFSYPGMQDHGPLFDHNS.

The large ATPase domain (RuvB-L) stretch occupies residues 1–182 (MRIEALNTAP…FGINSRLDYY (182 aa)). Residues Ile-21, Arg-22, Gly-63, Lys-66, Thr-67, Thr-68, 129 to 131 (EDY), Arg-172, Tyr-182, and Arg-219 each bind ATP. Thr-67 contacts Mg(2+). The interval 183–253 (SPELLQSIIV…VARRTLESLE (71 aa)) is small ATPAse domain (RuvB-S). Residues 256 to 342 (EGGLDDMDKK…DHGPLFDHNS (87 aa)) form a head domain (RuvB-H) region. Residues Arg-311 and Arg-316 each contribute to the DNA site.

The protein belongs to the RuvB family. Homohexamer. Forms an RuvA(8)-RuvB(12)-Holliday junction (HJ) complex. HJ DNA is sandwiched between 2 RuvA tetramers; dsDNA enters through RuvA and exits via RuvB. An RuvB hexamer assembles on each DNA strand where it exits the tetramer. Each RuvB hexamer is contacted by two RuvA subunits (via domain III) on 2 adjacent RuvB subunits; this complex drives branch migration. In the full resolvosome a probable DNA-RuvA(4)-RuvB(12)-RuvC(2) complex forms which resolves the HJ.

It is found in the cytoplasm. The enzyme catalyses ATP + H2O = ADP + phosphate + H(+). The RuvA-RuvB-RuvC complex processes Holliday junction (HJ) DNA during genetic recombination and DNA repair, while the RuvA-RuvB complex plays an important role in the rescue of blocked DNA replication forks via replication fork reversal (RFR). RuvA specifically binds to HJ cruciform DNA, conferring on it an open structure. The RuvB hexamer acts as an ATP-dependent pump, pulling dsDNA into and through the RuvAB complex. RuvB forms 2 homohexamers on either side of HJ DNA bound by 1 or 2 RuvA tetramers; 4 subunits per hexamer contact DNA at a time. Coordinated motions by a converter formed by DNA-disengaged RuvB subunits stimulates ATP hydrolysis and nucleotide exchange. Immobilization of the converter enables RuvB to convert the ATP-contained energy into a lever motion, pulling 2 nucleotides of DNA out of the RuvA tetramer per ATP hydrolyzed, thus driving DNA branch migration. The RuvB motors rotate together with the DNA substrate, which together with the progressing nucleotide cycle form the mechanistic basis for DNA recombination by continuous HJ branch migration. Branch migration allows RuvC to scan DNA until it finds its consensus sequence, where it cleaves and resolves cruciform DNA. This is Holliday junction branch migration complex subunit RuvB from Chlorobaculum parvum (strain DSM 263 / NCIMB 8327) (Chlorobium vibrioforme subsp. thiosulfatophilum).